The primary structure comprises 802 residues: Oligophrenin-1 (802 aa).

One can recognise a PH domain in the interval 265–368 (QPTIEGYLYT…WMEAMDGKEP (104 aa)). Residues 380–564 (MELNEVGFKF…ILIEHFGKIY (185 aa)) form the Rho-GAP domain. 2 disordered regions span residues 606–665 (SLDE…SEPC) and 681–802 (GTKA…GDES). The span at 617 to 627 (QTPNGTITSNL) shows a compositional bias: polar residues. The span at 716 to 732 (HHKEGDTDGFSKVRPPG) shows a compositional bias: basic and acidic residues.

As to quaternary structure, interacts with HOMER1. Interacts with AMPA receptor complexes. Interacts with SH3GL2 (endophilin-A1). Interacts (via C-terminus) with NR1D1.

The protein resides in the postsynapse. Its subcellular location is the presynapse. The protein localises to the cell projection. It localises to the axon. It is found in the dendritic spine. The protein resides in the dendrite. Its subcellular location is the cytoplasm. Functionally, stimulates GTP hydrolysis of members of the Rho family. Its action on RHOA activity and signaling is implicated in growth and stabilization of dendritic spines, and therefore in synaptic function. Critical for the stabilization of AMPA receptors at postsynaptic sites. Critical for the regulation of synaptic vesicle endocytosis at presynaptic terminals. Required for the localization of NR1D1 to dendrites, can suppress its repressor activity and protect it from proteasomal degradation. This is Oligophrenin-1 (Ophn1) from Mus musculus (Mouse).